A 252-amino-acid chain; its full sequence is Carboxymethylenebutenolidase (252 aa).

Residues 1 to 28 (MCHNKSSAPPTPAHISIQQNRTPGTDPV) are disordered. Active-site residues include Cys126, Asp183, and His214.

It belongs to the dienelactone hydrolase family.

It catalyses the reaction 2-(5-oxo-2,5-dihydrofuran-2-ylidene)acetate + H2O = 4-oxohex-2-enedioate + H(+). It functions in the pathway aromatic compound metabolism; 3-chlorocatechol degradation. Its function is as follows. Ring cleavage of cyclic ester dienelactone to produce maleylacetate. The protein is Carboxymethylenebutenolidase (clcD) of Rhodococcus opacus (Nocardia opaca).